The chain runs to 122 residues: Large ribosomal subunit protein uL14c (122 aa).

It belongs to the universal ribosomal protein uL14 family. As to quaternary structure, part of the 50S ribosomal subunit.

It is found in the plastid. It localises to the chloroplast. In terms of biological role, binds to 23S rRNA. The protein is Large ribosomal subunit protein uL14c of Phaseolus vulgaris (Kidney bean).